The sequence spans 107 residues: Nucleoid-associated protein RC1337 (107 aa).

It belongs to the YbaB/EbfC family. In terms of assembly, homodimer.

It localises to the cytoplasm. The protein localises to the nucleoid. Functionally, binds to DNA and alters its conformation. May be involved in regulation of gene expression, nucleoid organization and DNA protection. The protein is Nucleoid-associated protein RC1337 of Rickettsia conorii (strain ATCC VR-613 / Malish 7).